Reading from the N-terminus, the 109-residue chain is Spermidine export protein MdtI (109 aa).

Over 1-5 (MAQFE) the chain is Periplasmic. Residues 6-26 (WVHAAWLALAIVLEIVANVFL) traverse the membrane as a helical segment. The Cytoplasmic portion of the chain corresponds to 27–35 (KFSDGFRRK). A helical transmembrane segment spans residues 36 to 56 (IFGLLSLAAVLAAFSALSQAV). The Periplasmic portion of the chain corresponds to 57–63 (KGIDLSV). Residues 64-84 (VYALWGGFGIAATLAAGWILF) traverse the membrane as a helical segment. The Cytoplasmic segment spans residues 85–87 (GQR). Residues 88–108 (LNRKGWIGLVLLLAGMIMVKL) form a helical membrane-spanning segment. Ala109 is a topological domain (periplasmic).

Belongs to the drug/metabolite transporter (DMT) superfamily. Small multidrug resistance (SMR) (TC 2.A.7.1) family. MdtI subfamily. In terms of assembly, forms a complex with MdtJ.

It is found in the cell inner membrane. In terms of biological role, catalyzes the excretion of spermidine. This Shigella flexneri protein is Spermidine export protein MdtI (mdtI).